The sequence spans 233 residues: Large ribosomal subunit protein uL1 (233 aa).

This sequence belongs to the universal ribosomal protein uL1 family. In terms of assembly, part of the 50S ribosomal subunit.

Functionally, binds directly to 23S rRNA. The L1 stalk is quite mobile in the ribosome, and is involved in E site tRNA release. Its function is as follows. Protein L1 is also a translational repressor protein, it controls the translation of the L11 operon by binding to its mRNA. This Geotalea uraniireducens (strain Rf4) (Geobacter uraniireducens) protein is Large ribosomal subunit protein uL1.